Consider the following 140-residue polypeptide: Glycine cleavage system H protein (140 aa).

The 83-residue stretch at 22–104 (EVVIGITRFA…YGKGWMLRLK (83 aa)) folds into the Lipoyl-binding domain. At lysine 63 the chain carries N6-lipoyllysine.

Belongs to the GcvH family. The glycine cleavage system is composed of four proteins: P, T, L and H. (R)-lipoate is required as a cofactor.

Functionally, the glycine cleavage system catalyzes the degradation of glycine. The H protein shuttles the methylamine group of glycine from the P protein to the T protein. The sequence is that of Glycine cleavage system H protein from Magnetococcus marinus (strain ATCC BAA-1437 / JCM 17883 / MC-1).